Consider the following 395-residue polypeptide: S-adenosylmethionine synthase (395 aa).

An ATP-binding site is contributed by His-14. Mg(2+) is bound at residue Asp-16. Residue Glu-42 participates in K(+) binding. Glu-55 and Gln-98 together coordinate L-methionine. The flexible loop stretch occupies residues Gln-98–Lys-108. ATP is bound by residues Asp-174–Lys-176, Arg-240–Phe-241, Asp-249, Arg-255–Lys-256, Ala-272, and Lys-276. An L-methionine-binding site is contributed by Asp-249. An L-methionine-binding site is contributed by Lys-280.

Belongs to the AdoMet synthase family. Homotetramer; dimer of dimers. Requires Mg(2+) as cofactor. The cofactor is K(+).

Its subcellular location is the cytoplasm. It catalyses the reaction L-methionine + ATP + H2O = S-adenosyl-L-methionine + phosphate + diphosphate. It participates in amino-acid biosynthesis; S-adenosyl-L-methionine biosynthesis; S-adenosyl-L-methionine from L-methionine: step 1/1. Functionally, catalyzes the formation of S-adenosylmethionine (AdoMet) from methionine and ATP. The overall synthetic reaction is composed of two sequential steps, AdoMet formation and the subsequent tripolyphosphate hydrolysis which occurs prior to release of AdoMet from the enzyme. The protein is S-adenosylmethionine synthase of Thermotoga maritima (strain ATCC 43589 / DSM 3109 / JCM 10099 / NBRC 100826 / MSB8).